The following is a 485-amino-acid chain: Ribulose bisphosphate carboxylase large chain (485 aa).

Residues Asn124 and Thr174 each contribute to the substrate site. Lys176 acts as the Proton acceptor in catalysis. Lys178 is a binding site for substrate. Lys202, Asp204, and Glu205 together coordinate Mg(2+). Lys202 carries the post-translational modification N6-carboxylysine. Catalysis depends on His294, which acts as the Proton acceptor. Arg295, His327, and Ser379 together coordinate substrate.

The protein belongs to the RuBisCO large chain family. Type I subfamily. As to quaternary structure, heterohexadecamer of 8 large chains and 8 small chains. Requires Mg(2+) as cofactor.

It catalyses the reaction 2 (2R)-3-phosphoglycerate + 2 H(+) = D-ribulose 1,5-bisphosphate + CO2 + H2O. The enzyme catalyses D-ribulose 1,5-bisphosphate + O2 = 2-phosphoglycolate + (2R)-3-phosphoglycerate + 2 H(+). Functionally, ruBisCO catalyzes two reactions: the carboxylation of D-ribulose 1,5-bisphosphate, the primary event in carbon dioxide fixation, as well as the oxidative fragmentation of the pentose substrate. Both reactions occur simultaneously and in competition at the same active site. This chain is Ribulose bisphosphate carboxylase large chain, found in Rhodopseudomonas palustris (strain HaA2).